The primary structure comprises 604 residues: MADPKGSTSKEGFGDWCILEADCSDIENDMEQLFERDTDSDISDLIDDCDLEQGNSLELFHQQECKQSEEQLQKLKRKCLSPKAVAQLSPRLQSISLSPQQKSKRRLFAEQDSGVELTLNNEAEDVTTEVEVPAIDSRPDDEGGSGDVDIHYLSLLRSSNKKATLMAKFKAAFGVGFNELTRQFKSHKTCCNHWVVSVYAVHDDLFESSKQLLQQHCDYLWVRGIDAMSLYLLCFKAGKNRGTVHKLMTSMLNVHEQQILSEPPKLRNTAAALFWYKGCMGSGVFSYGPYPDWIAQQTILGHNNAEASTFDFSQMVQWAFDNQLVDEGDIAYRYARLAPEDANAVAWLAHNSQAKFVRECAAMVRFYKKGQMRDMSMSEWIYTKIHEVEGEGHWSDIVKFLRYQEVNFIMFLAAFKDFLHSKPKKNCILIHGPPNSGKSSFAMSLIRVLKGRVLSFVNSKSQFWLQPLSECKIALIDDVTDPCWLYMDNYLRNGLDGHYVSLDCKYKAPMQTKFPPLLLTSNINVHEEANYRYLHSRIKGFAFPNPFPMKSDDTPQFELTDQSWKSFFERLWTQLELSDQEDEGENGESQRAFQCSAGSANEHL.

Positions 76 to 78 (KRK) match the Nuclear localization signal motif. Serine 81 and serine 89 each carry phosphoserine; by host. The Nuclear export signal signature appears at 88-97 (LSPRLQSISL). The tract at residues 144–307 (GSGDVDIHYL…TILGHNNAEA (164 aa)) is DNA-binding region. The SF3 helicase domain occupies 406–556 (VNFIMFLAAF…FPMKSDDTPQ (151 aa)). 432-439 (GPPNSGKS) serves as a coordination point for ATP. A Glycyl lysine isopeptide (Lys-Gly) (interchain with G-Cter in SUMO) cross-link involves residue lysine 513. Residues 578 to 604 (SDQEDEGENGESQRAFQCSAGSANEHL) are disordered. Residues 587 to 604 (GESQRAFQCSAGSANEHL) are compositionally biased toward polar residues.

Belongs to the papillomaviridae E1 protein family. Can form hexamers. Interacts with E2 protein; this interaction increases E1 DNA binding specificity. Interacts with host DNA polymerase subunit POLA2. Interacts with host single stranded DNA-binding protein RPA1. Interacts with host TOP1; this interaction stimulates the enzymatic activity of TOP1. Post-translationally, phosphorylated. Sumoylated.

The protein resides in the host nucleus. It carries out the reaction Couples ATP hydrolysis with the unwinding of duplex DNA by translocating in the 3'-5' direction.. The catalysed reaction is ATP + H2O = ADP + phosphate + H(+). In terms of biological role, ATP-dependent DNA 3'-5' helicase required for initiation of viral DNA replication. It forms a complex with the viral E2 protein. The E1-E2 complex binds to the replication origin which contains binding sites for both proteins. During the initial step, a dimer of E1 interacts with a dimer of protein E2 leading to a complex that binds the viral origin of replication with high specificity. Then, a second dimer of E1 displaces the E2 dimer in an ATP-dependent manner to form the E1 tetramer. Following this, two E1 monomers are added to each half of the site, which results in the formation of two E1 trimers on the viral ori. Subsequently, two hexamers will be created. The double hexamer acts as a bi-directional helicase machinery and unwinds the viral DNA and then recruits the host DNA polymerase to start replication. The polypeptide is Replication protein E1 (Homo sapiens (Human)).